The primary structure comprises 408 residues: Acetylornithine/succinyldiaminopimelate aminotransferase (408 aa).

Pyridoxal 5'-phosphate-binding positions include 108–109 and Phe141; that span reads GA. Arg144 lines the N(2)-acetyl-L-ornithine pocket. Position 226–229 (226–229) interacts with pyridoxal 5'-phosphate; it reads DEIQ. The residue at position 255 (Lys255) is an N6-(pyridoxal phosphate)lysine. Residue Thr283 coordinates N(2)-acetyl-L-ornithine. Thr284 is a pyridoxal 5'-phosphate binding site.

Belongs to the class-III pyridoxal-phosphate-dependent aminotransferase family. ArgD subfamily. Homodimer. The cofactor is pyridoxal 5'-phosphate.

The protein resides in the cytoplasm. It carries out the reaction N(2)-acetyl-L-ornithine + 2-oxoglutarate = N-acetyl-L-glutamate 5-semialdehyde + L-glutamate. It catalyses the reaction N-succinyl-(2S,6S)-2,6-diaminopimelate + 2-oxoglutarate = (S)-2-succinylamino-6-oxoheptanedioate + L-glutamate. Its pathway is amino-acid biosynthesis; L-arginine biosynthesis; N(2)-acetyl-L-ornithine from L-glutamate: step 4/4. The protein operates within amino-acid biosynthesis; L-lysine biosynthesis via DAP pathway; LL-2,6-diaminopimelate from (S)-tetrahydrodipicolinate (succinylase route): step 2/3. In terms of biological role, involved in both the arginine and lysine biosynthetic pathways. This Buchnera aphidicola subsp. Acyrthosiphon pisum (strain APS) (Acyrthosiphon pisum symbiotic bacterium) protein is Acetylornithine/succinyldiaminopimelate aminotransferase.